The primary structure comprises 296 residues: 33 kDa chaperonin (296 aa).

Cystine bridges form between C236/C238 and C269/C272.

This sequence belongs to the HSP33 family. In terms of processing, under oxidizing conditions two disulfide bonds are formed involving the reactive cysteines. Under reducing conditions zinc is bound to the reactive cysteines and the protein is inactive.

It localises to the cytoplasm. Its function is as follows. Redox regulated molecular chaperone. Protects both thermally unfolding and oxidatively damaged proteins from irreversible aggregation. Plays an important role in the bacterial defense system toward oxidative stress. This chain is 33 kDa chaperonin, found in Lactobacillus helveticus (strain DPC 4571).